The chain runs to 313 residues: MHTPVVFIDGDQGTTGLQIHARLQGRSDLRLLTLPEAERKDPQRRCEAINSADIALLCLPDDAAREAVAAIHNPQVRVIDASSAHRTTPGWVYGLPELDEQQAERIAQSTRVSNPGCYPTGAIALLHPLVKAGLLPADYPLNIHAVSGYSGGGRAAVERHEQPGAAKAPALQLYGLELAHKHVPEIQQHAGLSARPMFMPGYGAYRQGIALSIPLQLRLLPGQVSAEHLQACLEQHYQGARHVQVMPLHQCGAAANLDPEALNGSNDLRLALYANPEHGQVLLTAVFDNLGKGASGAAVQNLDLMLGALQAHG.

Residue Cys-117 is part of the active site.

The protein belongs to the NAGSA dehydrogenase family. Type 2 subfamily.

The protein resides in the cytoplasm. It catalyses the reaction N-acetyl-L-glutamate 5-semialdehyde + phosphate + NADP(+) = N-acetyl-L-glutamyl 5-phosphate + NADPH + H(+). It participates in amino-acid biosynthesis; L-arginine biosynthesis; N(2)-acetyl-L-ornithine from L-glutamate: step 3/4. In terms of biological role, catalyzes the NADPH-dependent reduction of N-acetyl-5-glutamyl phosphate to yield N-acetyl-L-glutamate 5-semialdehyde. The polypeptide is N-acetyl-gamma-glutamyl-phosphate reductase 2 (Pseudomonas putida (strain ATCC 47054 / DSM 6125 / CFBP 8728 / NCIMB 11950 / KT2440)).